Here is a 598-residue protein sequence, read N- to C-terminus: Beta-galactosidase (598 aa).

Positions 1-21 (MLRTTLAPLVLALALALPAAA) are cleaved as a signal peptide. The active-site Proton donor is the Glu-184. The active-site Nucleophile is Glu-260.

This sequence belongs to the glycosyl hydrolase 35 family.

The catalysed reaction is Hydrolysis of terminal non-reducing beta-D-galactose residues in beta-D-galactosides.. In terms of biological role, preferentially hydrolyzes beta(1-&gt;3) galactosyl linkages over beta(1-&gt;4) linkages. This Xanthomonas manihotis protein is Beta-galactosidase (bga).